We begin with the raw amino-acid sequence, 407 residues long: P2X receptor D (407 aa).

Residues 1–22 (MDWDNIFSYNTAKIVTIKDRRL) lie on the Cytoplasmic side of the membrane. Residues 23 to 43 (GGLHIIFMVLIIVYIVIYSTI) form a helical membrane-spanning segment. Topologically, residues 44 to 300 (YKKGYLLTET…IQNGEIGSFN (257 aa)) are lumenal. The tract at residues 283–296 (RHGIRLIFIQNGEI) is pore-forming motif. Residues 301–321 (FQALLLTFVSGLGLLAISTVL) form a helical membrane-spanning segment. Topologically, residues 322-407 (VDQLAIRFLP…QNIQNNNIIL (86 aa)) are cytoplasmic. The disordered stretch occupies residues 371–394 (KNNENNNNNDDYNDDDNEIFDDNN). Residues 381–391 (DYNDDDNEIFD) show a composition bias toward acidic residues.

It belongs to the P2X receptor family.

It localises to the contractile vacuole membrane. Functionally, P2X receptors are ligand-gated ion channels that play a role in intracellular calcium signaling. ATP does not evoke inward currents in p2xD. Not essential for osmoregulation. The chain is P2X receptor D (p2xD) from Dictyostelium discoideum (Social amoeba).